We begin with the raw amino-acid sequence, 365 residues long: Serpentine receptor class epsilon-38 (365 aa).

The next 7 helical transmembrane spans lie at 26–46, 65–85, 124–144, 168–188, 196–216, 256–276, and 285–305; these read GMYL…GVII, IMTA…LLII, ALVI…FGIL, IPVF…YFVL, LGTS…LAVW, LVIV…CLVI, and IFIH…CSTL.

The protein belongs to the nematode receptor-like protein sre family.

The protein resides in the membrane. This Caenorhabditis elegans protein is Serpentine receptor class epsilon-38 (sre-38).